Here is a 96-residue protein sequence, read N- to C-terminus: Co-chaperonin GroES (96 aa).

The protein belongs to the GroES chaperonin family. Heptamer of 7 subunits arranged in a ring. Interacts with the chaperonin GroEL.

Its subcellular location is the cytoplasm. In terms of biological role, together with the chaperonin GroEL, plays an essential role in assisting protein folding. The GroEL-GroES system forms a nano-cage that allows encapsulation of the non-native substrate proteins and provides a physical environment optimized to promote and accelerate protein folding. GroES binds to the apical surface of the GroEL ring, thereby capping the opening of the GroEL channel. The chain is Co-chaperonin GroES from Shewanella denitrificans (strain OS217 / ATCC BAA-1090 / DSM 15013).